The following is a 74-amino-acid chain: Serine rich endogenous peptide 23 (74 aa).

An N-terminal signal peptide occupies residues 1–25 (MNKVVVYVLALSILLFFGLPNTTLA). The SCOOP motif signature appears at 52-66 (KIAVGGSDSVRAHSK). A SxS motif essential for MIK2 binding motif is present at residues 58–60 (SDS).

It belongs to the serine rich endogenous peptide (SCOOP) phytocytokine family. As to quaternary structure, interacts with MIK2 (via extracellular leucine-rich repeat domain); this interaction triggers the formation of complex between MIK2 and the BAK1/SERK3 and SERK4 coreceptors, and subsequent BAK1 activation by phosphorylation. As to expression, mostly expressed in roots, and, to a lower extent, in seedlings shoots.

Its subcellular location is the cell membrane. The protein resides in the secreted. It is found in the extracellular space. It localises to the apoplast. Functionally, brassicaceae-specific phytocytokine (plant endogenous peptide released into the apoplast) perceived by MIK2 in a BAK1/SERK3 and SERK4 coreceptors-dependent manner, that modulates various physiological and antimicrobial processes including growth prevention and reactive oxygen species (ROS) response regulation. Inhibits root growth. The polypeptide is Serine rich endogenous peptide 23 (Arabidopsis thaliana (Mouse-ear cress)).